The primary structure comprises 590 residues: Cell division protein FtsZ 1 (590 aa).

GTP is bound by residues 24–28 (GGGGN), 111–113 (GTG), Glu-142, Arg-146, and Asp-190. Disordered regions lie at residues 346–372 (AAVP…QPLQ) and 524–590 (EATN…RQSS). The span at 534 to 546 (AAAPSAASQQRRP) shows a compositional bias: low complexity. The span at 559 to 576 (GQLDDHGRAAPQMRSHED) shows a compositional bias: basic and acidic residues.

This sequence belongs to the FtsZ family. Homodimer. Polymerizes to form a dynamic ring structure in a strictly GTP-dependent manner. Interacts directly with several other division proteins.

The protein localises to the cytoplasm. In terms of biological role, essential cell division protein that forms a contractile ring structure (Z ring) at the future cell division site. The regulation of the ring assembly controls the timing and the location of cell division. One of the functions of the FtsZ ring is to recruit other cell division proteins to the septum to produce a new cell wall between the dividing cells. Binds GTP and shows GTPase activity. The chain is Cell division protein FtsZ 1 from Rhizobium meliloti (strain 1021) (Ensifer meliloti).